The chain runs to 290 residues: Probable aquaporin PIP2-7 (290 aa).

A run of 2 helical transmembrane segments spans residues 45-65 and 79-99; these read ALIAEFMATLIFLYVSIATVI and GVGYLGVAWSFGATIFVLVYC. The NPA 1 motif lies at 109–111; that stretch reads NPA. Transmembrane regions (helical) follow at residues 128-148, 168-188, and 202-222; these read VLYVVAQCLGAIAGAGIVKGI, SAAGALGAEIVGTFILVYTVF, and IPVLVPLPIGFAVFVVHLATI. An NPA 2 motif is present at residues 230 to 232; sequence NPA. A helical transmembrane segment spans residues 252–272; that stretch reads IFWVGPVIGAFLAAAYHKLVL.

The protein belongs to the MIP/aquaporin (TC 1.A.8) family. PIP (TC 1.A.8.11) subfamily. Expressed in roots.

Its subcellular location is the cell membrane. In terms of biological role, aquaporins facilitate the transport of water and small neutral solutes across cell membranes. The chain is Probable aquaporin PIP2-7 (PIP2-7) from Oryza sativa subsp. japonica (Rice).